A 439-amino-acid chain; its full sequence is Histidinol dehydrogenase (439 aa).

Tyr-127, Gln-185, and Asn-208 together coordinate NAD(+). Ser-234, Gln-256, and His-259 together coordinate substrate. Residues Gln-256 and His-259 each contribute to the Zn(2+) site. Catalysis depends on proton acceptor residues Glu-323 and His-324. Positions 324, 357, 411, and 416 each coordinate substrate. Asp-357 is a binding site for Zn(2+). His-416 contacts Zn(2+).

Belongs to the histidinol dehydrogenase family. Zn(2+) serves as cofactor.

The enzyme catalyses L-histidinol + 2 NAD(+) + H2O = L-histidine + 2 NADH + 3 H(+). Its pathway is amino-acid biosynthesis; L-histidine biosynthesis; L-histidine from 5-phospho-alpha-D-ribose 1-diphosphate: step 9/9. Functionally, catalyzes the sequential NAD-dependent oxidations of L-histidinol to L-histidinaldehyde and then to L-histidine. The sequence is that of Histidinol dehydrogenase from Aliivibrio fischeri (strain ATCC 700601 / ES114) (Vibrio fischeri).